The chain runs to 204 residues: High frequency lysogenization protein HflD homolog (204 aa).

Belongs to the HflD family.

The protein resides in the cytoplasm. The protein localises to the cell inner membrane. This chain is High frequency lysogenization protein HflD homolog, found in Xanthomonas euvesicatoria pv. vesicatoria (strain 85-10) (Xanthomonas campestris pv. vesicatoria).